Here is a 193-residue protein sequence, read N- to C-terminus: Dihydrofolate reductase (193 aa).

Residues 1–193 (MIKLVFRYSP…VTTLTESVYK (193 aa)) enclose the DHFR domain. NADP(+)-binding positions include Arg7, 22–27 (FGLGDG), 52–55 (GAKT), and 73–77 (DLARD).

The protein belongs to the dihydrofolate reductase family.

It catalyses the reaction (6S)-5,6,7,8-tetrahydrofolate + NADP(+) = 7,8-dihydrofolate + NADPH + H(+). It participates in cofactor biosynthesis; tetrahydrofolate biosynthesis; 5,6,7,8-tetrahydrofolate from 7,8-dihydrofolate: step 1/1. Its function is as follows. Key enzyme in folate metabolism. Catalyzes an essential reaction for de novo glycine and purine synthesis, and for DNA precursor synthesis. The polypeptide is Dihydrofolate reductase (frd) (Escherichia coli (Bacteriophage T4)).